The following is a 523-amino-acid chain: Protein nucleotidyltransferase YdiU (523 aa).

Positions 101, 103, 104, 128, 140, 141, 198, and 205 each coordinate ATP. Residue Asp-275 is the Proton acceptor of the active site. Positions 276 and 285 each coordinate Mg(2+). Asp-285 serves as a coordination point for ATP.

It belongs to the SELO family. The cofactor is Mg(2+). Mn(2+) serves as cofactor.

It carries out the reaction L-seryl-[protein] + ATP = 3-O-(5'-adenylyl)-L-seryl-[protein] + diphosphate. The enzyme catalyses L-threonyl-[protein] + ATP = 3-O-(5'-adenylyl)-L-threonyl-[protein] + diphosphate. It catalyses the reaction L-tyrosyl-[protein] + ATP = O-(5'-adenylyl)-L-tyrosyl-[protein] + diphosphate. The catalysed reaction is L-histidyl-[protein] + UTP = N(tele)-(5'-uridylyl)-L-histidyl-[protein] + diphosphate. It carries out the reaction L-seryl-[protein] + UTP = O-(5'-uridylyl)-L-seryl-[protein] + diphosphate. The enzyme catalyses L-tyrosyl-[protein] + UTP = O-(5'-uridylyl)-L-tyrosyl-[protein] + diphosphate. Functionally, nucleotidyltransferase involved in the post-translational modification of proteins. It can catalyze the addition of adenosine monophosphate (AMP) or uridine monophosphate (UMP) to a protein, resulting in modifications known as AMPylation and UMPylation. The polypeptide is Protein nucleotidyltransferase YdiU (Aromatoleum aromaticum (strain DSM 19018 / LMG 30748 / EbN1) (Azoarcus sp. (strain EbN1))).